Consider the following 364-residue polypeptide: Anthranilate phosphoribosyltransferase (364 aa).

5-phospho-alpha-D-ribose 1-diphosphate is bound by residues G101, 104-105, T109, 111-114, 129-137, and G141; these read GD, NLST, and KHGNRAASS. An anthranilate-binding site is contributed by G101. Residue S113 participates in Mg(2+) binding. Anthranilate is bound at residue N132. Residue R187 coordinates anthranilate. Mg(2+) is bound by residues D245 and E246.

It belongs to the anthranilate phosphoribosyltransferase family. As to quaternary structure, homodimer. Requires Mg(2+) as cofactor.

It catalyses the reaction N-(5-phospho-beta-D-ribosyl)anthranilate + diphosphate = 5-phospho-alpha-D-ribose 1-diphosphate + anthranilate. It participates in amino-acid biosynthesis; L-tryptophan biosynthesis; L-tryptophan from chorismate: step 2/5. Its function is as follows. Catalyzes the transfer of the phosphoribosyl group of 5-phosphorylribose-1-pyrophosphate (PRPP) to anthranilate to yield N-(5'-phosphoribosyl)-anthranilate (PRA). This chain is Anthranilate phosphoribosyltransferase, found in Mycolicibacterium vanbaalenii (strain DSM 7251 / JCM 13017 / BCRC 16820 / KCTC 9966 / NRRL B-24157 / PYR-1) (Mycobacterium vanbaalenii).